Consider the following 504-residue polypeptide: L-carnitine/gamma-butyrobetaine antiporter (504 aa).

12 helical membrane-spanning segments follow: residues M10–V30, W51–F71, I92–I112, G143–V163, F195–V215, L231–L251, S263–M283, W316–A336, L347–G367, W398–A418, L446–L466, and A475–I495.

It belongs to the BCCT transporter (TC 2.A.15) family. CaiT subfamily. In terms of assembly, homotrimer.

The protein localises to the cell inner membrane. It carries out the reaction 4-(trimethylamino)butanoate(in) + (R)-carnitine(out) = 4-(trimethylamino)butanoate(out) + (R)-carnitine(in). It functions in the pathway amine and polyamine metabolism; carnitine metabolism. Its function is as follows. Catalyzes the exchange of L-carnitine for gamma-butyrobetaine. This Shigella dysenteriae serotype 1 (strain Sd197) protein is L-carnitine/gamma-butyrobetaine antiporter.